The following is a 99-amino-acid chain: MDPVDPKLEPWNHPGSQPQTACNNCYCKKCCYHCQMCFLKKGLGISYGRKKRSQRHRTPASLQDHQNSISKQPLSRTHGDPTGPKEQKKEVASKTETDP.

The interval 1–24 (MDPVDPKLEPWNHPGSQPQTACNN) is interaction with human CREBBP. The interval 1–48 (MDPVDPKLEPWNHPGSQPQTACNNCYCKKCCYHCQMCFLKKGLGISYG) is transactivation. 3 residues coordinate Zn(2+): Cys-22, Cys-25, and Cys-27. Positions 22–37 (CNNCYCKKCCYHCQMC) are cysteine-rich. Position 28 is an N6-acetyllysine; by host PCAF (Lys-28). Zn(2+) is bound by residues Cys-30, His-33, Cys-34, and Cys-37. Residues 38–48 (FLKKGLGISYG) form a core region. The span at 48–58 (GRKKRSQRHRT) shows a compositional bias: basic residues. The tract at residues 48 to 99 (GRKKRSQRHRTPASLQDHQNSISKQPLSRTHGDPTGPKEQKKEVASKTETDP) is disordered. Residues 49–57 (RKKRSQRHR) carry the Nuclear localization signal, RNA-binding (TAR), and protein transduction motif. The tract at residues 49–86 (RKKRSQRHRTPASLQDHQNSISKQPLSRTHGDPTGPKE) is interaction with the host capping enzyme RNGTT. N6-acetyllysine; by host EP300 and GCN5L2 occurs at positions 50 and 51. Residue Arg-52 is modified to Asymmetric dimethylarginine; by host PRMT6. Residues 60–75 (ASLQDHQNSISKQPLS) show a composition bias toward polar residues. Lys-71 participates in a covalent cross-link: Glycyl lysine isopeptide (Lys-Gly) (interchain with G-Cter in ubiquitin). Basic and acidic residues predominate over residues 77–99 (THGDPTGPKEQKKEVASKTETDP).

Belongs to the lentiviruses Tat family. As to quaternary structure, interacts with host CCNT1. Associates with the P-TEFb complex composed at least of Tat, P-TEFb (CDK9 and CCNT1), TAR RNA, RNA Pol II. Recruits the HATs CREBBP, TAF1/TFIID, EP300, PCAF and GCN5L2. Interacts with host KAT5/Tip60; this interaction targets the latter to degradation. Interacts with the host deacetylase SIRT1. Interacts with host capping enzyme RNGTT; this interaction stimulates RNGTT. Binds to host KDR, and to the host integrins ITGAV/ITGB3 and ITGA5/ITGB1. Interacts with host KPNB1/importin beta-1 without previous binding to KPNA1/importin alpha-1. Interacts with EIF2AK2. Interacts with host nucleosome assembly protein NAP1L1; this interaction may be required for the transport of Tat within the nucleus, since the two proteins interact at the nuclear rim. Interacts with host C1QBP/SF2P32; this interaction involves lysine-acetylated Tat. Interacts with the host chemokine receptors CCR2, CCR3 and CXCR4. Interacts with host DPP4/CD26; this interaction may trigger an anti-proliferative effect. Interacts with host LDLR. Interacts with the host extracellular matrix metalloproteinase MMP1. Interacts with host PRMT6; this interaction mediates Tat's methylation. Interacts with, and is ubiquitinated by MDM2/Hdm2. Interacts with host PSMC3 and HTATIP2. Interacts with STAB1; this interaction may overcome SATB1-mediated repression of IL2 and IL2RA (interleukin) in T cells by binding to the same domain than HDAC1. Interacts (when acetylated) with human CDK13, thereby increasing HIV-1 mRNA splicing and promoting the production of the doubly spliced HIV-1 protein Nef. Interacts with host TBP; this interaction modulates the activity of transcriptional pre-initiation complex. Interacts with host RELA. Interacts with host PLSCR1; this interaction negatively regulates Tat transactivation activity by altering its subcellular distribution. In terms of processing, asymmetrical arginine methylation by host PRMT6 seems to diminish the transactivation capacity of Tat and affects the interaction with host CCNT1. Post-translationally, acetylation by EP300, CREBBP, GCN5L2/GCN5 and PCAF regulates the transactivation activity of Tat. EP300-mediated acetylation of Lys-50 promotes dissociation of Tat from the TAR RNA through the competitive binding to PCAF's bromodomain. In addition, the non-acetylated Tat's N-terminus can also interact with PCAF. PCAF-mediated acetylation of Lys-28 enhances Tat's binding to CCNT1. Lys-50 is deacetylated by SIRT1. Polyubiquitination by host MDM2 does not target Tat to degradation, but activates its transactivation function and fosters interaction with CCNT1 and TAR RNA. In terms of processing, phosphorylated by EIF2AK2 on serine and threonine residues adjacent to the basic region important for TAR RNA binding and function. Phosphorylation of Tat by EIF2AK2 is dependent on the prior activation of EIF2AK2 by dsRNA.

It localises to the host nucleus. It is found in the host nucleolus. The protein localises to the host cytoplasm. Its subcellular location is the secreted. Functionally, transcriptional activator that increases RNA Pol II processivity, thereby increasing the level of full-length viral transcripts. Recognizes a hairpin structure at the 5'-LTR of the nascent viral mRNAs referred to as the transactivation responsive RNA element (TAR) and recruits the cyclin T1-CDK9 complex (P-TEFb complex) that will in turn hyperphosphorylate the RNA polymerase II to allow efficient elongation. The CDK9 component of P-TEFb and other Tat-activated kinases hyperphosphorylate the C-terminus of RNA Pol II that becomes stabilized and much more processive. Other factors such as HTATSF1/Tat-SF1, SUPT5H/SPT5, and HTATIP2 are also important for Tat's function. Besides its effect on RNA Pol II processivity, Tat induces chromatin remodeling of proviral genes by recruiting the histone acetyltransferases (HATs) CREBBP, EP300 and PCAF to the chromatin. This also contributes to the increase in proviral transcription rate, especially when the provirus integrates in transcriptionally silent region of the host genome. To ensure maximal activation of the LTR, Tat mediates nuclear translocation of NF-kappa-B by interacting with host RELA. Through its interaction with host TBP, Tat may also modulate transcription initiation. Tat can reactivate a latently infected cell by penetrating in it and transactivating its LTR promoter. In the cytoplasm, Tat is thought to act as a translational activator of HIV-1 mRNAs. In terms of biological role, extracellular circulating Tat can be endocytosed by surrounding uninfected cells via the binding to several surface receptors such as CD26, CXCR4, heparan sulfate proteoglycans (HSPG) or LDLR. Neurons are rarely infected, but they internalize Tat via their LDLR. Through its interaction with nuclear HATs, Tat is potentially able to control the acetylation-dependent cellular gene expression. Modulates the expression of many cellular genes involved in cell survival, proliferation or in coding for cytokines or cytokine receptors. Tat plays a role in T-cell and neurons apoptosis. Tat induced neurotoxicity and apoptosis probably contribute to neuroAIDS. Circulating Tat also acts as a chemokine-like and/or growth factor-like molecule that binds to specific receptors on the surface of the cells, affecting many cellular pathways. In the vascular system, Tat binds to ITGAV/ITGB3 and ITGA5/ITGB1 integrins dimers at the surface of endothelial cells and competes with bFGF for heparin-binding sites, leading to an excess of soluble bFGF. In Homo sapiens (Human), this protein is Protein Tat.